Here is a 270-residue protein sequence, read N- to C-terminus: Non-homologous end joining protein Ku (270 aa).

Residues 10–194 enclose the Ku domain; that stretch reads SLGLLNIGIK…NYPIQKQELT (185 aa).

Belongs to the prokaryotic Ku family. Homodimer. Interacts with LigD.

With LigD forms a non-homologous end joining (NHEJ) DNA repair enzyme, which repairs dsDNA breaks with reduced fidelity. Binds linear dsDNA with 5'- and 3'- overhangs but not closed circular dsDNA nor ssDNA. Recruits and stimulates the ligase activity of LigD. This chain is Non-homologous end joining protein Ku, found in Bacillus thuringiensis subsp. konkukian (strain 97-27).